A 478-amino-acid chain; its full sequence is Protein nucleotidyltransferase YdiU (478 aa).

Gly84, Gly86, Arg87, Lys107, Asp119, Gly120, Arg170, and Arg177 together coordinate ATP. The active-site Proton acceptor is the Asp246. Mg(2+) contacts are provided by Asn247 and Asp256. Asp256 lines the ATP pocket.

This sequence belongs to the SELO family. Mg(2+) serves as cofactor. Mn(2+) is required as a cofactor.

It catalyses the reaction L-seryl-[protein] + ATP = 3-O-(5'-adenylyl)-L-seryl-[protein] + diphosphate. The enzyme catalyses L-threonyl-[protein] + ATP = 3-O-(5'-adenylyl)-L-threonyl-[protein] + diphosphate. The catalysed reaction is L-tyrosyl-[protein] + ATP = O-(5'-adenylyl)-L-tyrosyl-[protein] + diphosphate. It carries out the reaction L-histidyl-[protein] + UTP = N(tele)-(5'-uridylyl)-L-histidyl-[protein] + diphosphate. It catalyses the reaction L-seryl-[protein] + UTP = O-(5'-uridylyl)-L-seryl-[protein] + diphosphate. The enzyme catalyses L-tyrosyl-[protein] + UTP = O-(5'-uridylyl)-L-tyrosyl-[protein] + diphosphate. In terms of biological role, nucleotidyltransferase involved in the post-translational modification of proteins. It can catalyze the addition of adenosine monophosphate (AMP) or uridine monophosphate (UMP) to a protein, resulting in modifications known as AMPylation and UMPylation. The polypeptide is Protein nucleotidyltransferase YdiU (Escherichia coli (strain SE11)).